Reading from the N-terminus, the 301-residue chain is ATP synthase gamma chain (301 aa).

The protein belongs to the ATPase gamma chain family. F-type ATPases have 2 components, CF(1) - the catalytic core - and CF(0) - the membrane proton channel. CF(1) has five subunits: alpha(3), beta(3), gamma(1), delta(1), epsilon(1). CF(0) has three main subunits: a, b and c.

Its subcellular location is the cell inner membrane. In terms of biological role, produces ATP from ADP in the presence of a proton gradient across the membrane. The gamma chain is believed to be important in regulating ATPase activity and the flow of protons through the CF(0) complex. In Bordetella pertussis (strain Tohama I / ATCC BAA-589 / NCTC 13251), this protein is ATP synthase gamma chain.